Here is a 98-residue protein sequence, read N- to C-terminus: Sm-like protein LSM3B (98 aa).

Ser-2 bears the N-acetylserine mark. Positions 11 to 96 constitute a Sm domain; it reads EPLDLIRLSL…VILVSPPLRT (86 aa).

Belongs to the snRNP Sm proteins family. Component of the heptameric LSM1-LSM7 complex that forms a seven-membered ring structure with a donut shape. The LSM subunits are arranged in the order LSM1, LSM2, LSM3, LSM6, LSM5, LSM7 and LSM4. Component of the heptameric LSM2-LSM8 complex that forms a seven-membered ring structure with a donut shape. The LSM subunits are arranged in the order LSM8, LSM2, LSM3, LSM6, LSM5, LSM7 and LSM4. LSM3B subunit interacts only with its two neighboring subunits, LSM2 and LSM6A or LSM6B. In terms of tissue distribution, expressed in roots, leaves, stems, flowers and siliques.

It is found in the cytoplasm. The protein resides in the nucleus. Component of LSM protein complexes, which are involved in RNA processing. Component of the cytoplasmic LSM1-LSM7 complex which is involved in mRNA degradation by promoting decapping and leading to accurate 5'-3' mRNA decay. The cytoplasmic LSM1-LSM7 complex regulates developmental gene expression by the decapping of specific development-related transcripts. Component of the nuclear LSM2-LSM8 complex which is involved splicing nuclear mRNAs. LSM2-LSM8 binds directly to the U6 small nuclear RNAs (snRNAs) and is essential for accurate splicing of selected development-related mRNAs through the stabilization of the spliceosomal U6 snRNA. Plays a critical role in the regulation of development-related gene expression. In Arabidopsis thaliana (Mouse-ear cress), this protein is Sm-like protein LSM3B.